Here is a 90-residue protein sequence, read N- to C-terminus: Guanine nucleotide-binding protein subunit gamma (90 aa).

Residue Cys86 is the site of S-palmitoyl cysteine attachment. Cys87 carries the cysteine methyl ester modification. Cys87 carries S-farnesyl cysteine lipidation. A propeptide spans 88-90 (removed in mature form); that stretch reads TIM.

Belongs to the G protein gamma family. In terms of assembly, g proteins are composed of 3 units, alpha, beta and gamma.

It localises to the membrane. The polypeptide is Guanine nucleotide-binding protein subunit gamma (Kluyveromyces lactis (strain ATCC 8585 / CBS 2359 / DSM 70799 / NBRC 1267 / NRRL Y-1140 / WM37) (Yeast)).